A 308-amino-acid chain; its full sequence is Ornithine carbamoyltransferase (308 aa).

Carbamoyl phosphate contacts are provided by residues 55–58 (STRT), Q82, R106, and 133–136 (HPCQ). Residues N164, D227, and 231-232 (SM) each bind L-ornithine. Carbamoyl phosphate is bound by residues 267-268 (CL) and R295.

The protein belongs to the aspartate/ornithine carbamoyltransferase superfamily. OTCase family.

It is found in the cytoplasm. The catalysed reaction is carbamoyl phosphate + L-ornithine = L-citrulline + phosphate + H(+). The protein operates within amino-acid biosynthesis; L-arginine biosynthesis; L-arginine from L-ornithine and carbamoyl phosphate: step 1/3. Its function is as follows. Reversibly catalyzes the transfer of the carbamoyl group from carbamoyl phosphate (CP) to the N(epsilon) atom of ornithine (ORN) to produce L-citrulline. The protein is Ornithine carbamoyltransferase of Prochlorococcus marinus (strain MIT 9312).